The following is a 219-amino-acid chain: Tegument protein UL14 (219 aa).

The tract at residues 159 to 219 (VHTDAPSRPG…GFARDCPDGE (61 aa)) is disordered. Residues 186–202 (APPPETAPSPEPAPGPA) are compositionally biased toward pro residues.

The protein belongs to the alphaherpesvirinae HHV-1 UL14 protein family. Post-translationally, phosphorylated.

It localises to the virion tegument. Its subcellular location is the host cytoplasm. The protein resides in the host nucleus. Contributes to the nuclear transport of the viral transcriptional activator VP16 during the early phase of infection. Therefore, participates indirectly in the regulation of the immediate-early gene expression. Additionally, seems to be important for efficient nuclear targeting of capsids. In Human herpesvirus 2 (strain HG52) (HHV-2), this protein is Tegument protein UL14.